The primary structure comprises 231 residues: Ribonuclease 3 (231 aa).

Positions 8–135 (VGDLERRIGH…LMAALYQDGG (128 aa)) constitute an RNase III domain. E48 provides a ligand contact to Mg(2+). Active-site residues include D52 and E124. A Mg(2+)-binding site is contributed by E124. In terms of domain architecture, DRBM spans 161-230 (DPKTALQEWA…AKALLEREGA (70 aa)). Residues 210-231 (GKSRQEAEKAAAKALLEREGAG) are disordered. Residues 212 to 231 (SRQEAEKAAAKALLEREGAG) show a composition bias toward basic and acidic residues.

It belongs to the ribonuclease III family. Homodimer. Mg(2+) serves as cofactor.

It localises to the cytoplasm. The catalysed reaction is Endonucleolytic cleavage to 5'-phosphomonoester.. Digests double-stranded RNA. Involved in the processing of primary rRNA transcript to yield the immediate precursors to the large and small rRNAs (23S and 16S). Processes some mRNAs, and tRNAs when they are encoded in the rRNA operon. Processes pre-crRNA and tracrRNA of type II CRISPR loci if present in the organism. The protein is Ribonuclease 3 of Caulobacter vibrioides (strain ATCC 19089 / CIP 103742 / CB 15) (Caulobacter crescentus).